A 278-amino-acid chain; its full sequence is MAALEEKASQVAEWLKKIFGDHPIPQYEMNARTTEILYHLSERNRVRDRDVNLVIEDLRQKASEYESEAKRLEDFLMESVNFSPANLSNTGSRFLNALVDSAIALEIKDTSLASFIPAVNDLTSDLFRTKSKSEEIKLELGKLEKNLTATLVLEKCLREDLKKADVHLSAERAKAEGRLQNMDFLKAKAAEFRFGIRAAEEQLSSRGMDASLSHRSLVALSDKLSELKQQTIPLKKKLESYLDLMPNPSLAQVKIEEAKRELDAIEAELTKKVDMMEL.

Coiled coils occupy residues 128-150 (RTKS…LTAT) and 248-278 (PSLA…MMEL).

This sequence belongs to the HAUS1 family. As to quaternary structure, component of the HAUS augmin-like complex. The complex interacts with the gamma-tubulin ring complex and this interaction is required for spindle assembly. Associates with microtubules. The interaction with microtubules is strong during mitosis, while it is weak or absent during interphase. It is unclear whether this interaction is direct or indirect. Interacts with EML3 (phosphorylated form).

Its subcellular location is the cytoplasm. The protein localises to the cytoskeleton. The protein resides in the microtubule organizing center. It localises to the centrosome. It is found in the spindle. Its subcellular location is the spindle pole. Contributes to mitotic spindle assembly, maintenance of centrosome integrity and completion of cytokinesis as part of the HAUS augmin-like complex. This Rattus norvegicus (Rat) protein is HAUS augmin-like complex subunit 1 (Haus1).